We begin with the raw amino-acid sequence, 675 residues long: MDRHALGGGGALEIEKTPEAAEDMESEPALAAAREAERVPPWREQVTARGMVAALLIGVVYTVIVMKLSLTTGLIPTLNVSAALLAFLALRGWTHALDRLGIASRPFTRQENTVIQTCAVACYTIGYGGGFGSFLLGLNKKTYELSGASTPGNVPGSYKEPGIGWMTGFLLSTSFVGLLTLLPLRKVLVIDYKLTYPSGTATAVLINGFHTPQGDKNAKKQVRGFLRYFGISFLWSFFQWFYTGGDVCGFLQFPTFGLKAWKHTFFFDFSLTYVGAGMICSHLVNLSLLFGAILSWGIMWPLIGKQKGNWYSAKASESSMSGLFGYKSFICIALLVGDGFYNFVKVIVVTLKSVRERSRRRGLNNRVADADTMAIDDMQRNEVFNRDNIPTWMAYTGYTLLSVIAVVLIPVMFRQVKWYYVIIAYLLAPALGFCNAYGTGLTDMNMGYNYGKIALFIFAAWAGKDDGVVAGLVGCGLVKQLVLISADLMHDFKTGHLTLTSPRSMLVGQVVGTLMGCVVAPLTFFLFYKAFDVGDPNGYWKAPYALIYRNMAIIGVEGFSALPRHCLQLCAGFFAFAVLANLARDFLPRRYGRYMPLPMAMAVPFLVGASFAIDMCAGSLVVFLWHRFDGKRAALLVPAVASGLICGDGIWTFPSSLLALAKVKPPICMKFIPGN.

The segment covering 1 to 11 has biased composition (gly residues); it reads MDRHALGGGGA. The disordered stretch occupies residues 1–20; it reads MDRHALGGGGALEIEKTPEA. Helical transmembrane passes span 50–70, 73–93, 118–138, 162–182, 231–251, 283–303, 329–349, 393–413, 421–441, 453–473, 507–527, 567–587, 605–625, and 633–653; these read GMVAALLIGVVYTVIVMKLSL, GLIPTLNVSAALLAFLALRGW, CAVACYTIGYGGGFGSFLLGL, GIGWMTGFLLSTSFVGLLTLL, ISFLWSFFQWFYTGGDVCGFL, LVNLSLLFGAILSWGIMWPLI, FICIALLVGDGFYNFVKVIVV, MAYTGYTLLSVIAVVLIPVMF, VIIAYLLAPALGFCNAYGTGL, IALFIFAAWAGKDDGVVAGLV, VGQVVGTLMGCVVAPLTFFLF, LQLCAGFFAFAVLANLARDFL, FLVGASFAIDMCAGSLVVFLW, and AALLVPAVASGLICGDGIWTF.

This sequence belongs to the YSL (TC 2.A.67.2) family. In terms of tissue distribution, expressed in roots.

It is found in the membrane. Its function is as follows. May be involved in the transport of nicotianamine-chelated metals. The chain is Probable metal-nicotianamine transporter YSL16 (YSL16) from Oryza sativa subsp. japonica (Rice).